Consider the following 139-residue polypeptide: ATP synthase epsilon chain (139 aa).

It belongs to the ATPase epsilon chain family. In terms of assembly, F-type ATPases have 2 components, CF(1) - the catalytic core - and CF(0) - the membrane proton channel. CF(1) has five subunits: alpha(3), beta(3), gamma(1), delta(1), epsilon(1). CF(0) has three main subunits: a, b and c.

It localises to the cell inner membrane. In terms of biological role, produces ATP from ADP in the presence of a proton gradient across the membrane. The chain is ATP synthase epsilon chain from Acinetobacter baumannii (strain AB307-0294).